Here is a 256-residue protein sequence, read N- to C-terminus: Ubiquinone/menaquinone biosynthesis C-methyltransferase UbiE (256 aa).

Residues 1–19 show a composition bias toward polar residues; that stretch reads MQNRSSSPDSSSAGNTHFG. Residues 1 to 24 form a disordered region; sequence MQNRSSSPDSSSAGNTHFGFQSVP. S-adenosyl-L-methionine is bound by residues Thr-81, Asp-102, and 128–129; that span reads DA.

Belongs to the class I-like SAM-binding methyltransferase superfamily. MenG/UbiE family.

It catalyses the reaction a 2-demethylmenaquinol + S-adenosyl-L-methionine = a menaquinol + S-adenosyl-L-homocysteine + H(+). The catalysed reaction is a 2-methoxy-6-(all-trans-polyprenyl)benzene-1,4-diol + S-adenosyl-L-methionine = a 5-methoxy-2-methyl-3-(all-trans-polyprenyl)benzene-1,4-diol + S-adenosyl-L-homocysteine + H(+). Its pathway is quinol/quinone metabolism; menaquinone biosynthesis; menaquinol from 1,4-dihydroxy-2-naphthoate: step 2/2. The protein operates within cofactor biosynthesis; ubiquinone biosynthesis. Methyltransferase required for the conversion of demethylmenaquinol (DMKH2) to menaquinol (MKH2) and the conversion of 2-polyprenyl-6-methoxy-1,4-benzoquinol (DDMQH2) to 2-polyprenyl-3-methyl-6-methoxy-1,4-benzoquinol (DMQH2). The protein is Ubiquinone/menaquinone biosynthesis C-methyltransferase UbiE of Bordetella avium (strain 197N).